Here is a 119-residue protein sequence, read N- to C-terminus: Protein yippee-like 1 (119 aa).

In terms of domain architecture, Yippee spans 19–116 (RTYSCIHCRA…IELAHMIKDN (98 aa)). The Zn(2+) site is built by Cys-23, Cys-26, Cys-79, and Cys-82. Residues 99–104 (KYKEGK) carry the Nuclear localization signal motif.

The protein belongs to the yippee family.

It localises to the nucleus. Functionally, may play a role in epithelioid conversion of fibroblasts. This chain is Protein yippee-like 1 (YPEL1), found in Chlorocebus aethiops (Green monkey).